A 409-amino-acid polypeptide reads, in one-letter code: Aspartate aminotransferase, cytoplasmic (409 aa).

The residue at position 2 (S2) is an N-acetylserine. G38, W138, and N191 together coordinate L-aspartate. K255 bears the N6-(pyridoxal phosphate)lysine mark. Residue R383 coordinates L-aspartate. S385 bears the Phosphoserine mark.

It belongs to the class-I pyridoxal-phosphate-dependent aminotransferase family. Homodimer. The cofactor is pyridoxal 5'-phosphate.

Its subcellular location is the cytoplasm. The enzyme catalyses L-aspartate + 2-oxoglutarate = oxaloacetate + L-glutamate. Plays a key role in amino acid metabolism. The chain is Aspartate aminotransferase, cytoplasmic from Schizosaccharomyces pombe (strain 972 / ATCC 24843) (Fission yeast).